Reading from the N-terminus, the 417-residue chain is NADH-quinone oxidoreductase subunit D (417 aa).

The protein belongs to the complex I 49 kDa subunit family. As to quaternary structure, NDH-1 is composed of 14 different subunits. Subunits NuoB, C, D, E, F, and G constitute the peripheral sector of the complex.

Its subcellular location is the cell inner membrane. It catalyses the reaction a quinone + NADH + 5 H(+)(in) = a quinol + NAD(+) + 4 H(+)(out). Its function is as follows. NDH-1 shuttles electrons from NADH, via FMN and iron-sulfur (Fe-S) centers, to quinones in the respiratory chain. The immediate electron acceptor for the enzyme in this species is believed to be ubiquinone. Couples the redox reaction to proton translocation (for every two electrons transferred, four hydrogen ions are translocated across the cytoplasmic membrane), and thus conserves the redox energy in a proton gradient. This chain is NADH-quinone oxidoreductase subunit D, found in Alkalilimnicola ehrlichii (strain ATCC BAA-1101 / DSM 17681 / MLHE-1).